The primary structure comprises 390 residues: METFLFTSESVNEGHPDKLCDQVSDAILDACLEQDPESKVACETCTKTNMVMVFGEITTKATVNYEKIVRDTCRGIGFTSPDVGLDADNCKVLVNIEQQSPDIAQGVHGHLTKKPEEIGAGDQGHMFGYATDETPELMPLTHVLATKLGAKLTEVRKNKTCPWLRPDGKTQVTVEYRNEGGAMVPIRVHTVLISTQHDETVTNEQIAQDLKEHVIKPVIPAQYLDDQTIFHLNPSGRFVIGGPHGDAGLTGRKIIIDTYGGWGAHGGGAFSGKDPTKVDRSGAYIVRQAAKSVVASGLARRCLVQVSYAIGVAEPLSVFVDTFKTGKIPDKDILALIKENFDFRPGMIAINLDLKRGGNFRYQKTAALGHLGRDDPDFTWETVKILKPKA.

Glu-9 lines the Mg(2+) pocket. Position 15 (His-15) interacts with ATP. Glu-43 contributes to the K(+) binding site. Residues Glu-56 and Gln-99 each contribute to the L-methionine site. Residues 167-169 (DGK), 235-238 (SGRF), Asp-246, 252-253 (RK), Ala-269, Lys-273, and Lys-277 contribute to the ATP site. Asp-246 contributes to the L-methionine binding site. Lys-277 serves as a coordination point for L-methionine.

The protein belongs to the AdoMet synthase family. As to quaternary structure, homotetramer. Mn(2+) serves as cofactor. Requires Mg(2+) as cofactor. The cofactor is Co(2+). It depends on K(+) as a cofactor. NH4(+) is required as a cofactor. Mostly expressed in roots, and, to a lower extent, in hypocotyls and cotyledons.

It localises to the cytoplasm. It carries out the reaction L-methionine + ATP + H2O = S-adenosyl-L-methionine + phosphate + diphosphate. It participates in amino-acid biosynthesis; S-adenosyl-L-methionine biosynthesis; S-adenosyl-L-methionine from L-methionine: step 1/1. Inhibited by products of SAMS reaction (SAM, Pi, PPi), substrate analogs (cycloleucine and ethionine), and alternative nucleotides (GTP, CTP and ADP). Strongly repressed by PPPi. Its function is as follows. Catalyzes the formation of S-adenosylmethionine from methionine and ATP. The reaction comprises two steps that are both catalyzed by the same enzyme: formation of S-adenosylmethionine (AdoMet) and triphosphate, and subsequent hydrolysis of the triphosphate. The sequence is that of S-adenosylmethionine synthase 3 (SAMS3) from Catharanthus roseus (Madagascar periwinkle).